Consider the following 524-residue polypeptide: Lysine--tRNA ligase (524 aa).

Mg(2+)-binding residues include glutamate 433 and glutamate 440.

This sequence belongs to the class-II aminoacyl-tRNA synthetase family. Homodimer. The cofactor is Mg(2+).

It is found in the cytoplasm. It carries out the reaction tRNA(Lys) + L-lysine + ATP = L-lysyl-tRNA(Lys) + AMP + diphosphate. The polypeptide is Lysine--tRNA ligase (Colwellia psychrerythraea (strain 34H / ATCC BAA-681) (Vibrio psychroerythus)).